The chain runs to 410 residues: Chloroacetanilide N-alkylformylase, ferredoxin reductase component (410 aa).

FAD is bound by residues Gly-14, Asp-36, Lys-49, Val-82, Arg-130, Asp-279, and Val-298.

This sequence belongs to the FAD-dependent oxidoreductase family. In terms of assembly, the chloroacetanilide N-alkylformylase multicomponent enzyme system is composed of an oxygenase component (CndA) and an electron transfer component formed by a ferredoxin reductase (CndC1) and a ferredoxin (CndB1). In vitro, chloroacetanilide N-alkylformylase assays in which CndB1 is substituted for CndB2 demonstrate that the two enzymes possess nearly identical activities. It depends on FAD as a cofactor.

It carries out the reaction 2 reduced [2Fe-2S]-[ferredoxin] + NAD(+) + H(+) = 2 oxidized [2Fe-2S]-[ferredoxin] + NADH. In terms of biological role, component of the chloroacetanilide N-alkylformylase multicomponent enzyme system involved in the degradation of chloroacetanilide herbicides (N-alkoxyalkyl-N-chloroacetyl-substituted aniline derivatives). In vitro, catalyzes the transfers of electrons from ferredoxin (CndB1) to NADH. N-dealkylase utilizes NADH, but not NADPH, as the electron donor. The polypeptide is Chloroacetanilide N-alkylformylase, ferredoxin reductase component (Rhizorhabdus wittichii (strain DC-6 / KACC 16600) (Sphingomonas wittichii)).